A 94-amino-acid polypeptide reads, in one-letter code: MFKVNEYFDGTVKSIAFGTAEGPATIGVMAPGEYEFGTAQREIMHVVSGALTVRLPDSADWETFPAGSQFNVPANSKFQLKVAVDTAYLCEYRG.

Belongs to the nucleoside phosphorylase PpnP family.

It catalyses the reaction a purine D-ribonucleoside + phosphate = a purine nucleobase + alpha-D-ribose 1-phosphate. The catalysed reaction is adenosine + phosphate = alpha-D-ribose 1-phosphate + adenine. The enzyme catalyses cytidine + phosphate = cytosine + alpha-D-ribose 1-phosphate. It carries out the reaction guanosine + phosphate = alpha-D-ribose 1-phosphate + guanine. It catalyses the reaction inosine + phosphate = alpha-D-ribose 1-phosphate + hypoxanthine. The catalysed reaction is thymidine + phosphate = 2-deoxy-alpha-D-ribose 1-phosphate + thymine. The enzyme catalyses uridine + phosphate = alpha-D-ribose 1-phosphate + uracil. It carries out the reaction xanthosine + phosphate = alpha-D-ribose 1-phosphate + xanthine. Functionally, catalyzes the phosphorolysis of diverse nucleosides, yielding D-ribose 1-phosphate and the respective free bases. Can use uridine, adenosine, guanosine, cytidine, thymidine, inosine and xanthosine as substrates. Also catalyzes the reverse reactions. The protein is Pyrimidine/purine nucleoside phosphorylase of Pseudomonas fluorescens (strain ATCC BAA-477 / NRRL B-23932 / Pf-5).